Here is a 341-residue protein sequence, read N- to C-terminus: uncharacterized protein (341 aa).

A coiled-coil region spans residues 153 to 179 (AYTLSEKVMNAEREAEETRETIIREAH). Over residues 319–335 (EQLQNPAPESAPSTSKT) the composition is skewed to polar residues. The disordered stretch occupies residues 319–341 (EQLQNPAPESAPSTSKTLRSKNP).

This is an uncharacterized protein from Coxiella burnetii (strain RSA 493 / Nine Mile phase I).